Here is a 378-residue protein sequence, read N- to C-terminus: Transcription elongation factor TFIIS (378 aa).

Position 1 is an N-acetylmethionine (Met1). The TFIIS N-terminal domain occupies 10 to 89; sequence EGAKKAADAA…EIWKKVVIEE (80 aa). The TFIIS central domain occupies 210-333; sequence VRDKIRELLV…DCERGLAAKA (124 aa). A TFIIS-type zinc finger spans residues 336 to 376; sequence DQFKCGRCGQRKCTYYQMQTRSADEPMTTYVTCVNCDNHWK. Zn(2+)-binding residues include Cys340, Cys343, Cys368, and Cys371.

As to expression, expressed in roots, leaves and flowers.

Its subcellular location is the nucleus. In terms of biological role, necessary for efficient RNA polymerase II transcription elongation past template-encoded arresting sites. Involved in the control of seed dormancy and germination. This chain is Transcription elongation factor TFIIS, found in Arabidopsis thaliana (Mouse-ear cress).